The primary structure comprises 278 residues: MFTSPGPVLFQFGPLTLRWYGLLIAMAVLIGLNLSSRLAQSRKLENGLISDLLPLLVLFSVIGARLYYVAFEWHNYANQPIKALAIWEGGIAIHGALIAGTLTLILFCRWRSQPFLDVLDVLAPSVALGQAIGRWGNFFNSEAFGVPTDLAWKLFIPYANRPVIYADAEFFHPTFLYESIWNLLLFVLLLVLFRWGSRERQNFPAGTLSCVYLIGYSLGRIWIEGLRIDPLCVGALPPACEGGVRIAQLMSAMLMVLGGLGLWWLKRRQQQLPVSTNR.

4 helical membrane-spanning segments follow: residues 12–32 (FGPL…LIGL), 44–64 (LENG…VIGA), 86–106 (IWEG…TLIL), and 113–133 (QPFL…QAIG). Residue arginine 134 participates in a 1,2-diacyl-sn-glycero-3-phospho-(1'-sn-glycerol) binding. 3 helical membrane-spanning segments follow: residues 173 to 193 (PTFL…LVLF), 203 to 223 (FPAG…RIWI), and 246 to 266 (IAQL…WWLK).

The protein belongs to the Lgt family.

Its subcellular location is the cell inner membrane. It catalyses the reaction L-cysteinyl-[prolipoprotein] + a 1,2-diacyl-sn-glycero-3-phospho-(1'-sn-glycerol) = an S-1,2-diacyl-sn-glyceryl-L-cysteinyl-[prolipoprotein] + sn-glycerol 1-phosphate + H(+). The protein operates within protein modification; lipoprotein biosynthesis (diacylglyceryl transfer). In terms of biological role, catalyzes the transfer of the diacylglyceryl group from phosphatidylglycerol to the sulfhydryl group of the N-terminal cysteine of a prolipoprotein, the first step in the formation of mature lipoproteins. In Parasynechococcus marenigrum (strain WH8102), this protein is Phosphatidylglycerol--prolipoprotein diacylglyceryl transferase.